Consider the following 359-residue polypeptide: Probable dual-specificity RNA methyltransferase RlmN (359 aa).

Glu100 acts as the Proton acceptor in catalysis. Positions 106-340 constitute a Radical SAM core domain; sequence TDKRLTVCVS…VSVRASRGRD (235 aa). An intrachain disulfide couples Cys113 to Cys345. Positions 120, 124, and 127 each coordinate [4Fe-4S] cluster. Residues 167 to 168, Ser197, 226 to 228, and Asn302 contribute to the S-adenosyl-L-methionine site; these read GE and SLH. Cys345 (S-methylcysteine intermediate) is an active-site residue.

The protein belongs to the radical SAM superfamily. RlmN family. Requires [4Fe-4S] cluster as cofactor.

It localises to the cytoplasm. It carries out the reaction adenosine(2503) in 23S rRNA + 2 reduced [2Fe-2S]-[ferredoxin] + 2 S-adenosyl-L-methionine = 2-methyladenosine(2503) in 23S rRNA + 5'-deoxyadenosine + L-methionine + 2 oxidized [2Fe-2S]-[ferredoxin] + S-adenosyl-L-homocysteine. The enzyme catalyses adenosine(37) in tRNA + 2 reduced [2Fe-2S]-[ferredoxin] + 2 S-adenosyl-L-methionine = 2-methyladenosine(37) in tRNA + 5'-deoxyadenosine + L-methionine + 2 oxidized [2Fe-2S]-[ferredoxin] + S-adenosyl-L-homocysteine. Its function is as follows. Specifically methylates position 2 of adenine 2503 in 23S rRNA and position 2 of adenine 37 in tRNAs. The protein is Probable dual-specificity RNA methyltransferase RlmN of Prochlorococcus marinus (strain NATL2A).